We begin with the raw amino-acid sequence, 92 residues long: Large ribosomal subunit protein bL28 (92 aa).

This sequence belongs to the bacterial ribosomal protein bL28 family.

In Borreliella burgdorferi (strain ATCC 35210 / DSM 4680 / CIP 102532 / B31) (Borrelia burgdorferi), this protein is Large ribosomal subunit protein bL28.